A 763-amino-acid chain; its full sequence is 5-methyltetrahydropteroyltriglutamate--homocysteine methyltransferase (763 aa).

Residues 16 to 19 and Lys117 each bind 5-methyltetrahydropteroyltri-L-glutamate; that span reads RELK. L-homocysteine contacts are provided by residues 440-442 and Glu493; that span reads IGS. Residues 440–442 and Glu493 contribute to the L-methionine site; that span reads IGS. 5-methyltetrahydropteroyltri-L-glutamate-binding positions include 524-525 and Trp570; that span reads RC. Position 608 (Asp608) interacts with L-homocysteine. Asp608 lines the L-methionine pocket. Residue Glu614 participates in 5-methyltetrahydropteroyltri-L-glutamate binding. The Zn(2+) site is built by His650, Cys652, and Glu674. Residue His703 is the Proton donor of the active site. Residue Cys735 participates in Zn(2+) binding.

The protein belongs to the vitamin-B12 independent methionine synthase family. Zn(2+) serves as cofactor.

It catalyses the reaction 5-methyltetrahydropteroyltri-L-glutamate + L-homocysteine = tetrahydropteroyltri-L-glutamate + L-methionine. It functions in the pathway amino-acid biosynthesis; L-methionine biosynthesis via de novo pathway; L-methionine from L-homocysteine (MetE route): step 1/1. Its function is as follows. Catalyzes the transfer of a methyl group from 5-methyltetrahydrofolate to homocysteine resulting in methionine formation. This chain is 5-methyltetrahydropteroyltriglutamate--homocysteine methyltransferase, found in Alcanivorax borkumensis (strain ATCC 700651 / DSM 11573 / NCIMB 13689 / SK2).